Consider the following 116-residue polypeptide: Large ribosomal subunit protein bL19 (116 aa).

It belongs to the bacterial ribosomal protein bL19 family.

This protein is located at the 30S-50S ribosomal subunit interface and may play a role in the structure and function of the aminoacyl-tRNA binding site. The polypeptide is Large ribosomal subunit protein bL19 (Azotobacter vinelandii (strain DJ / ATCC BAA-1303)).